The primary structure comprises 104 residues: Large ribosomal subunit protein uL24 (104 aa).

The segment at 82–104 (RVGYRFDENGKKVRVSRRNGKDI) is disordered. The segment covering 93–104 (KVRVSRRNGKDI) has biased composition (basic residues).

Belongs to the universal ribosomal protein uL24 family. Part of the 50S ribosomal subunit.

In terms of biological role, one of two assembly initiator proteins, it binds directly to the 5'-end of the 23S rRNA, where it nucleates assembly of the 50S subunit. Functionally, one of the proteins that surrounds the polypeptide exit tunnel on the outside of the subunit. The protein is Large ribosomal subunit protein uL24 of Corynebacterium glutamicum (strain R).